The following is a 296-amino-acid chain: Probable endonuclease 4 (296 aa).

9 residues coordinate Zn(2+): His68, His109, Glu144, Asp178, His181, His213, Asp226, His228, and Glu258.

The protein belongs to the AP endonuclease 2 family. It depends on Zn(2+) as a cofactor.

The catalysed reaction is Endonucleolytic cleavage to 5'-phosphooligonucleotide end-products.. Endonuclease IV plays a role in DNA repair. It cleaves phosphodiester bonds at apurinic or apyrimidinic (AP) sites, generating a 3'-hydroxyl group and a 5'-terminal sugar phosphate. The sequence is that of Probable endonuclease 4 from Staphylococcus aureus (strain NCTC 8325 / PS 47).